Consider the following 414-residue polypeptide: 2,3-diketo-5-methylthiopentyl-1-phosphate enolase (414 aa).

Lysine 99 serves as the catalytic Proton acceptor. Substrate contacts are provided by residues lysine 148, 174–177 (KDDE), histidine 265, glycine 338, and 360–361 (GG). Mg(2+)-binding residues include lysine 174, aspartate 176, and glutamate 177. An N6-carboxylysine modification is found at lysine 174.

This sequence belongs to the RuBisCO large chain family. Type IV subfamily. In terms of assembly, homodimer. It depends on Mg(2+) as a cofactor.

The enzyme catalyses 5-methylsulfanyl-2,3-dioxopentyl phosphate = 2-hydroxy-5-methylsulfanyl-3-oxopent-1-enyl phosphate. Its pathway is amino-acid biosynthesis; L-methionine biosynthesis via salvage pathway; L-methionine from S-methyl-5-thio-alpha-D-ribose 1-phosphate: step 3/6. Functionally, catalyzes the enolization of 2,3-diketo-5-methylthiopentyl-1-phosphate (DK-MTP-1-P) into 2-hydroxy-3-keto-5-methylthiopentenyl-1-phosphate (HK-MTPenyl-1-P). The chain is 2,3-diketo-5-methylthiopentyl-1-phosphate enolase from Bacillus cereus (strain AH820).